The chain runs to 228 residues: Interleukin-27 subunit beta (228 aa).

Residues 1–18 (MSKLLFLSLALWASRSPG) form the signal peptide. Fibronectin type-III domains follow at residues 26–124 (ALSQ…VAER) and 127–224 (KPDP…VESA). 2 N-linked (GlcNAc...) asparagine glycosylation sites follow: asparagine 54 and asparagine 104.

This sequence belongs to the type I cytokine receptor family. Type 3 subfamily. Heterodimer with IL27/IL27A; not disulfide-linked. This heterodimer is known as interleukin IL-27. Heterodimer with IL12A; not disulfide-linked. This heterodimer is known as interleukin IL-35. Interacts with SQSTM1.

It localises to the secreted. Functionally, associates with IL27 to form the IL-27 interleukin, a heterodimeric cytokine which functions in innate immunity. IL-27 has pro- and anti-inflammatory properties, that can regulate T-helper cell development, suppress T-cell proliferation, stimulate cytotoxic T-cell activity, induce isotype switching in B-cells, and that has diverse effects on innate immune cells. Among its target cells are CD4 T-helper cells which can differentiate in type 1 effector cells (TH1), type 2 effector cells (TH2) and IL17 producing helper T-cells (TH17). It drives rapid clonal expansion of naive but not memory CD4 T-cells. It also strongly synergizes with IL-12 to trigger interferon-gamma/IFN-gamma production of naive CD4 T-cells, binds to the cytokine receptor WSX-1/TCCR. Another important role of IL-27 is its antitumor activity as well as its antiangiogenic activity with activation of production of antiangiogenic chemokines. This Mus musculus (Mouse) protein is Interleukin-27 subunit beta (Ebi3).